We begin with the raw amino-acid sequence, 88 residues long: Small ribosomal subunit protein uS17 (88 aa).

It belongs to the universal ribosomal protein uS17 family. Part of the 30S ribosomal subunit.

Functionally, one of the primary rRNA binding proteins, it binds specifically to the 5'-end of 16S ribosomal RNA. This chain is Small ribosomal subunit protein uS17, found in Nitratidesulfovibrio vulgaris (strain ATCC 29579 / DSM 644 / CCUG 34227 / NCIMB 8303 / VKM B-1760 / Hildenborough) (Desulfovibrio vulgaris).